A 437-amino-acid chain; its full sequence is Methylenetetrahydrofolate--tRNA-(uracil-5-)-methyltransferase TrmFO (437 aa).

Position 8 to 13 (8 to 13) interacts with FAD; the sequence is GAGLAG.

Belongs to the MnmG family. TrmFO subfamily. Requires FAD as cofactor.

The protein localises to the cytoplasm. It catalyses the reaction uridine(54) in tRNA + (6R)-5,10-methylene-5,6,7,8-tetrahydrofolate + NADH + H(+) = 5-methyluridine(54) in tRNA + (6S)-5,6,7,8-tetrahydrofolate + NAD(+). It carries out the reaction uridine(54) in tRNA + (6R)-5,10-methylene-5,6,7,8-tetrahydrofolate + NADPH + H(+) = 5-methyluridine(54) in tRNA + (6S)-5,6,7,8-tetrahydrofolate + NADP(+). Functionally, catalyzes the folate-dependent formation of 5-methyl-uridine at position 54 (M-5-U54) in all tRNAs. This chain is Methylenetetrahydrofolate--tRNA-(uracil-5-)-methyltransferase TrmFO, found in Desulfitobacterium hafniense (strain Y51).